Reading from the N-terminus, the 322-residue chain is Myeloid-associated differentiation marker (322 aa).

Residues 1-18 are compositionally biased toward low complexity; the sequence is MPVTVTRTTITTTTTSSS. A disordered region spans residues 1 to 21; the sequence is MPVTVTRTTITTTTTSSSGLG. Ser-22 bears the Phosphoserine mark. MARVEL domains are found at residues 31-163 and 168-319; these read ALTQ…ARPG and YMAT…HLVF. The next 8 helical transmembrane spans lie at 41 to 61, 70 to 90, 101 to 121, 137 to 157, 171 to 191, 203 to 223, 239 to 259, and 294 to 314; these read LLQLVSTCVAFSLVASVGAWT, FTWCFCFSVTLIILIVELCGL, FPITFACYAALFCLSASIIYP, AIAATFFSCIACVAYATEVAW, TVPGLLKVLETFVACIIFAFI, LEWCVAVYAICFILAAIAILL, FLSGLALLSVLLYATALVLWP, and LAVAILTAINLLAYVADLVHS.

It belongs to the MAL family. Widely expressed. Not detected in thymus.

Its subcellular location is the membrane. The protein is Myeloid-associated differentiation marker (MYADM) of Homo sapiens (Human).